The chain runs to 392 residues: Speckle-type POZ protein-like A (392 aa).

The 131-residue stretch at Lys31 to Val161 folds into the MATH domain. A BTB domain is found at Thr200–Glu267.

Belongs to the Tdpoz family. As to quaternary structure, homodimer. Heterodimer with SPOP. Component of cullin-RING-based BCR (BTB-CUL3-RBX1) E3 ubiquitin-protein ligase complexes containing homodimeric SPOPL or the heterodimer formed by SPOP and SPOPL.

Its subcellular location is the nucleus. It participates in protein modification; protein ubiquitination. Component of a cullin-RING-based BCR (BTB-CUL3-RBX1) E3 ubiquitin-protein ligase complex that mediates the ubiquitination and subsequent proteasomal degradation of target proteins, but with relatively low efficiency. This is Speckle-type POZ protein-like A (spopla) from Danio rerio (Zebrafish).